Reading from the N-terminus, the 229-residue chain is Leucyl/phenylalanyl-tRNA--protein transferase (229 aa).

The protein belongs to the L/F-transferase family.

The protein resides in the cytoplasm. The enzyme catalyses N-terminal L-lysyl-[protein] + L-leucyl-tRNA(Leu) = N-terminal L-leucyl-L-lysyl-[protein] + tRNA(Leu) + H(+). It catalyses the reaction N-terminal L-arginyl-[protein] + L-leucyl-tRNA(Leu) = N-terminal L-leucyl-L-arginyl-[protein] + tRNA(Leu) + H(+). It carries out the reaction L-phenylalanyl-tRNA(Phe) + an N-terminal L-alpha-aminoacyl-[protein] = an N-terminal L-phenylalanyl-L-alpha-aminoacyl-[protein] + tRNA(Phe). Functions in the N-end rule pathway of protein degradation where it conjugates Leu, Phe and, less efficiently, Met from aminoacyl-tRNAs to the N-termini of proteins containing an N-terminal arginine or lysine. The polypeptide is Leucyl/phenylalanyl-tRNA--protein transferase (Pseudomonas syringae pv. syringae (strain B728a)).